The chain runs to 281 residues: Small ribosomal subunit protein uS3 (281 aa).

The region spanning 38 to 106 (IRRLLSTGLE…QVQLNILEVK (69 aa)) is the KH type-2 domain. The disordered stretch occupies residues 218–281 (APAGAERARR…VTHEPQIAES (64 aa)). The segment covering 238 to 252 (SGAAGTTVTGTDAGR) has biased composition (low complexity).

This sequence belongs to the universal ribosomal protein uS3 family. As to quaternary structure, part of the 30S ribosomal subunit. Forms a tight complex with proteins S10 and S14.

Binds the lower part of the 30S subunit head. Binds mRNA in the 70S ribosome, positioning it for translation. This chain is Small ribosomal subunit protein uS3, found in Mycobacterium leprae (strain TN).